We begin with the raw amino-acid sequence, 206 residues long: Ion-translocating oxidoreductase complex subunit G (206 aa).

The helical transmembrane segment at G9–M29 threads the bilayer. At T174 the chain carries FMN phosphoryl threonine.

The protein belongs to the RnfG family. As to quaternary structure, the complex is composed of six subunits: RsxA, RsxB, RsxC, RsxD, RsxE and RsxG. It depends on FMN as a cofactor.

The protein resides in the cell inner membrane. Part of a membrane-bound complex that couples electron transfer with translocation of ions across the membrane. Required to maintain the reduced state of SoxR. The protein is Ion-translocating oxidoreductase complex subunit G of Salmonella typhi.